We begin with the raw amino-acid sequence, 568 residues long: Potassium-transporting ATPase potassium-binding subunit (568 aa).

10 helical membrane passes run 3–23 (TEVL…YPLG), 68–88 (LLVV…TQGV), 133–153 (FVIM…MAGI), 180–200 (LLPL…PMGF), 256–276 (VECW…GFYL), 281–301 (LGYS…CINV), 375–395 (FGGV…AVFI), 421–441 (IVAL…AYLF), 497–517 (IVLI…AGIL), and 535–555 (VTFG…SFFP).

It belongs to the KdpA family. As to quaternary structure, the system is composed of three essential subunits: KdpA, KdpB and KdpC.

The protein resides in the cell inner membrane. In terms of biological role, part of the high-affinity ATP-driven potassium transport (or Kdp) system, which catalyzes the hydrolysis of ATP coupled with the electrogenic transport of potassium into the cytoplasm. This subunit binds the periplasmic potassium ions and delivers the ions to the membrane domain of KdpB through an intramembrane tunnel. In Phocaeicola vulgatus (strain ATCC 8482 / DSM 1447 / JCM 5826 / CCUG 4940 / NBRC 14291 / NCTC 11154) (Bacteroides vulgatus), this protein is Potassium-transporting ATPase potassium-binding subunit.